Reading from the N-terminus, the 100-residue chain is NADH-quinone oxidoreductase subunit K (100 aa).

3 consecutive transmembrane segments (helical) span residues T4–L24, I29–F49, and I61–V81.

This sequence belongs to the complex I subunit 4L family. In terms of assembly, NDH-1 is composed of 14 different subunits. Subunits NuoA, H, J, K, L, M, N constitute the membrane sector of the complex.

It localises to the cell membrane. It carries out the reaction a quinone + NADH + 5 H(+)(in) = a quinol + NAD(+) + 4 H(+)(out). NDH-1 shuttles electrons from NADH, via FMN and iron-sulfur (Fe-S) centers, to quinones in the respiratory chain. The immediate electron acceptor for the enzyme in this species is believed to be ubiquinone. Couples the redox reaction to proton translocation (for every two electrons transferred, four hydrogen ions are translocated across the cytoplasmic membrane), and thus conserves the redox energy in a proton gradient. The polypeptide is NADH-quinone oxidoreductase subunit K (Chloroflexus aggregans (strain MD-66 / DSM 9485)).